The following is a 702-amino-acid chain: Dissimilatory sulfite reductase MccA (702 aa).

A signal peptide spans 1–39 (MLSGWSVLKGGNMKYWDKALLSLFMCVSTLSIAATHAVA). Heme c is bound by residues Cys-155, Cys-158, His-159, and His-171. 2 residues coordinate substrate: Lys-220 and Tyr-297. Cys-314, Cys-317, His-318, Cys-351, Cys-354, His-355, His-360, Cys-372, Cys-375, and His-376 together coordinate heme c. Arg-378 lines the substrate pocket. Cys-411 contributes to the Cu(+) binding site. Heme c-binding residues include His-423, Cys-430, Cys-433, His-434, His-437, Cys-474, Cys-477, His-478, His-491, Cys-496, Cys-499, and His-500. Residue Cys-507 participates in Cu(+) binding. Residues His-528, Cys-574, Cys-590, His-591, and His-675 each contribute to the heme c site.

The protein belongs to the multiheme cytochrome c family. Homotrimer. Requires Cu(+) as cofactor. Heme c is required as a cofactor.

Its subcellular location is the periplasm. The catalysed reaction is [protein]-disulfide + hydrogen sulfide + 2 A + 3 H2O = [protein]-dithiol + sulfite + 2 AH2 + H(+). Its pathway is sulfur metabolism; sulfite reduction. Its function is as follows. Respiratory sulfite reductase that catalyzes the reduction of sulfite to sulfide in a single step, consuming six electrons in the process. Required for sulfite respiration under anaerobic growth conditions. Has only marginal activity with nitrite. The polypeptide is Dissimilatory sulfite reductase MccA (Wolinella succinogenes (strain ATCC 29543 / DSM 1740 / CCUG 13145 / JCM 31913 / LMG 7466 / NCTC 11488 / FDC 602W) (Vibrio succinogenes)).